Here is a 214-residue protein sequence, read N- to C-terminus: Probable nicotinate-nucleotide adenylyltransferase (214 aa).

The protein belongs to the NadD family.

The catalysed reaction is nicotinate beta-D-ribonucleotide + ATP + H(+) = deamido-NAD(+) + diphosphate. The protein operates within cofactor biosynthesis; NAD(+) biosynthesis; deamido-NAD(+) from nicotinate D-ribonucleotide: step 1/1. Catalyzes the reversible adenylation of nicotinate mononucleotide (NaMN) to nicotinic acid adenine dinucleotide (NaAD). This chain is Probable nicotinate-nucleotide adenylyltransferase, found in Mycolicibacterium vanbaalenii (strain DSM 7251 / JCM 13017 / BCRC 16820 / KCTC 9966 / NRRL B-24157 / PYR-1) (Mycobacterium vanbaalenii).